The primary structure comprises 426 residues: MKLKSRYTSLISVVSIFFSSMVMAESDIVISVDEGVSIAQPIAVVPFKVNGGVSEDVGQVVADDLRNSGKFTPIQRAKLPSHPASVAEINSQQWTDIGVDVVVVGQITPANNGYNVAYQLVDTLSNPAVVLVQGSFNVPATQMRQAAHTVSDQIFEKLTQIRGAFRTKIAYVVQRGVSAYELRVADYDGFNAFTVVKSKEPLMSPEWSPNGSKLAYVTFENKRPQIVVHDLRSGQRSVVAALKGHNGAPAFSPDGSRLAFASNQDGELNIYIANINGGTPIKLTANVGNNTEPSWSPDGSIIYFTSDRAGSPQVYRMSSSGNDVIPIGTRGSYNAKASSDGKNLIMIAGDNVVKQDLTSGSTEVLSSTFLDESPSISPNGIMIIYSSTKGTSKVLQLVSADGRFKANLPGAEGQFKFPAWSPYLTK.

The signal sequence occupies residues 1-24 (MKLKSRYTSLISVVSIFFSSMVMA).

Belongs to the TolB family. The Tol-Pal system is composed of five core proteins: the inner membrane proteins TolA, TolQ and TolR, the periplasmic protein TolB and the outer membrane protein Pal. They form a network linking the inner and outer membranes and the peptidoglycan layer.

The protein resides in the periplasm. Its function is as follows. Part of the Tol-Pal system, which plays a role in outer membrane invagination during cell division and is important for maintaining outer membrane integrity. The protein is Tol-Pal system protein TolB of Haemophilus ducreyi (strain 35000HP / ATCC 700724).